A 426-amino-acid chain; its full sequence is Dihydroorotase (426 aa).

Residues histidine 58 and histidine 60 each contribute to the Zn(2+) site. Substrate is bound by residues 60–62 and asparagine 92; that span reads HLR. Zn(2+) contacts are provided by aspartate 150, histidine 177, and histidine 230. Asparagine 276 serves as a coordination point for substrate. Aspartate 303 lines the Zn(2+) pocket. Residue aspartate 303 is part of the active site. Substrate contacts are provided by residues histidine 307 and 321 to 322; that span reads FG.

Belongs to the metallo-dependent hydrolases superfamily. DHOase family. Class I DHOase subfamily. The cofactor is Zn(2+).

It catalyses the reaction (S)-dihydroorotate + H2O = N-carbamoyl-L-aspartate + H(+). The protein operates within pyrimidine metabolism; UMP biosynthesis via de novo pathway; (S)-dihydroorotate from bicarbonate: step 3/3. In terms of biological role, catalyzes the reversible cyclization of carbamoyl aspartate to dihydroorotate. This chain is Dihydroorotase, found in Listeria innocua serovar 6a (strain ATCC BAA-680 / CLIP 11262).